A 409-amino-acid chain; its full sequence is Histidinol dehydrogenase homolog (409 aa).

Belongs to the histidinol dehydrogenase family.

This is Histidinol dehydrogenase homolog from Synechocystis sp. (strain ATCC 27184 / PCC 6803 / Kazusa).